Reading from the N-terminus, the 365-residue chain is G-protein coupled receptor 4 (365 aa).

Residues 1 to 10 are Extracellular-facing; the sequence is MDNSTGTWEG. A glycan (N-linked (GlcNAc...) asparagine) is linked at asparagine 3. Residues 11–47 traverse the membrane as a helical segment; sequence CHVDSRVDHLFPPSLYIFVIGVGLPTNCLALWAAYRQ. 2 disulfides stabilise this stretch: cysteine 11–cysteine 260 and cysteine 92–cysteine 170. Over 48 to 51 the chain is Cytoplasmic; the sequence is VRQR. A helical transmembrane segment spans residues 52-82; it reads NELGVYLMNLSIADLLYICTLPLWVDYFLHH. The Extracellular portion of the chain corresponds to 83 to 87; sequence DNWIH. A helical membrane pass occupies residues 88 to 123; sequence GPGSCKLFGFIFYSNIYISIAFLCCISVDRYLAVAH. Over 124 to 131 the chain is Cytoplasmic; the sequence is PLRFARLR. A helical transmembrane segment spans residues 132-158; it reads RVKTAVAVSSVVWATELGANSAPLFHD. Residues 159 to 174 are Extracellular-facing; sequence ELFRDRYNHTFCFEKF. The segment at 159–174 is extracellular loop 2 (ECL2); sequence ELFRDRYNHTFCFEKF. N-linked (GlcNAc...) asparagine glycosylation occurs at asparagine 166. Residues 175–212 traverse the membrane as a helical segment; sequence PMERWVAWMNLYRVFVGFLFPWALMLLCYRGILRAVQS. The Cytoplasmic segment spans residues 213–216; that stretch reads SVST. The chain crosses the membrane as a helical span at residues 217-252; it reads ERQEKVKIKRLALSLIAIVLVCFAPYHALLLSRSAV. Over 253–262 the chain is Extracellular; that stretch reads YLGRPWDCGF. Residues 263–291 form a helical membrane-spanning segment; it reads EERVFSAYHSSLAFTSLNCVADPILYCLV. Residues 292 to 365 are Cytoplasmic-facing; it reads NEGARSDVAK…PLKVLLPPAQ (74 aa).

This sequence belongs to the G-protein coupled receptor 1 family.

It is found in the cell membrane. With respect to regulation, activated by a network of residues that connects an extracellular-facing cavity to Glu-147, a conserved charged residue buried in the transmembrane core of the receptor. Protonation likely drives conformational changes in extracellular loop 2 (ECL2), which stabilizes movement of transmembrane 3 (TM3) and a series of rearrangements that connect the extracellular-facing cavity to Glu-147, a residue only conserved in proton-sensing G-protein coupled receptors. In terms of biological role, proton-sensing G-protein coupled receptor activated by extracellular pH, which is required to monitor pH changes and generate adaptive reactions. Activated by an optimal pH of 6.8-7.2. Ligand binding causes a conformation change that triggers signaling via guanine nucleotide-binding proteins (G proteins) and modulates the activity of downstream effectors, such as adenylate cyclase. GPR4 is mainly coupled to G(s) G proteins and mediates activation of adenylate cyclase activity. May also couple with G(q) and G(12)/G(13) G proteins. Acts as a key regulator of respiratory sensitivity to CO2/H(+) in brain retrotrapezoid nucleus neurons: acts by mediating detection of protons generated by the formation of carbonic acid in the blood, an important mechanism to impulse to breathe. Also acts as a regulator of acid secretion in the kidney collecting duct by maintaining acid-base homeostasis in the kidney. Acidosis-induced GPR4 activation increases paracellular gap formation and permeability of vascular endothelial cells, possibly through the G(12)/G(13)/Rho GTPase signaling pathway. The protein is G-protein coupled receptor 4 of Rattus norvegicus (Rat).